Here is a 331-residue protein sequence, read N- to C-terminus: 6-phosphogluconolactonase (331 aa).

Lysine 287 carries the N6-acetyllysine modification.

This sequence belongs to the cycloisomerase 2 family.

The catalysed reaction is 6-phospho-D-glucono-1,5-lactone + H2O = 6-phospho-D-gluconate + H(+). The protein operates within carbohydrate degradation; pentose phosphate pathway; D-ribulose 5-phosphate from D-glucose 6-phosphate (oxidative stage): step 2/3. In terms of biological role, catalyzes the hydrolysis of 6-phosphogluconolactone to 6-phosphogluconate. This is 6-phosphogluconolactonase from Escherichia coli O139:H28 (strain E24377A / ETEC).